We begin with the raw amino-acid sequence, 362 residues long: Peptide chain release factor 1 (362 aa).

The residue at position 236 (Q236) is an N5-methylglutamine.

This sequence belongs to the prokaryotic/mitochondrial release factor family. Methylated by PrmC. Methylation increases the termination efficiency of RF1.

It localises to the cytoplasm. Functionally, peptide chain release factor 1 directs the termination of translation in response to the peptide chain termination codons UAG and UAA. The sequence is that of Peptide chain release factor 1 from Lactobacillus gasseri (strain ATCC 33323 / DSM 20243 / BCRC 14619 / CIP 102991 / JCM 1131 / KCTC 3163 / NCIMB 11718 / NCTC 13722 / AM63).